The sequence spans 226 residues: MSQIRWLGHAAVEILISGKRVIIDPLIKDNPLSPVKLNYLEGVSVVGVTHDHYDHLGDVVEILKMNSNAKLFATFDLEMYLVNQFKVPEAQLIPANVGGYVEHEGIRLALTKAVHSSEHSDPTGIVVSDGRTTIYHAGDTGLFEDMKLIGQVFQPDYALLPIGGRFTMDPRQAVIAVDMIKPRKAAIPIHFNTWDMIRVDPQEFVKGVKDKGYEAILLQPGQSIEL.

It belongs to the UPF0173 family.

In Metallosphaera sedula (strain ATCC 51363 / DSM 5348 / JCM 9185 / NBRC 15509 / TH2), this protein is UPF0173 metal-dependent hydrolase Msed_2125.